The following is a 110-amino-acid chain: UPF0122 protein BCAH187_A3894 (110 aa).

This sequence belongs to the UPF0122 family.

Functionally, might take part in the signal recognition particle (SRP) pathway. This is inferred from the conservation of its genetic proximity to ftsY/ffh. May be a regulatory protein. The polypeptide is UPF0122 protein BCAH187_A3894 (Bacillus cereus (strain AH187)).